The sequence spans 440 residues: Histidinol dehydrogenase (440 aa).

NAD(+)-binding residues include Tyr134, Gln196, and Asn219. Substrate-binding residues include Ser242, Gln264, and His267. Gln264 and His267 together coordinate Zn(2+). Active-site proton acceptor residues include Glu332 and His333. Substrate-binding residues include His333, Asp366, Glu420, and His425. Asp366 is a binding site for Zn(2+). His425 contacts Zn(2+).

Belongs to the histidinol dehydrogenase family. Requires Zn(2+) as cofactor.

It carries out the reaction L-histidinol + 2 NAD(+) + H2O = L-histidine + 2 NADH + 3 H(+). The protein operates within amino-acid biosynthesis; L-histidine biosynthesis; L-histidine from 5-phospho-alpha-D-ribose 1-diphosphate: step 9/9. Its function is as follows. Catalyzes the sequential NAD-dependent oxidations of L-histidinol to L-histidinaldehyde and then to L-histidine. The chain is Histidinol dehydrogenase from Prochlorococcus marinus (strain SARG / CCMP1375 / SS120).